A 469-amino-acid polypeptide reads, in one-letter code: MEKILTVQELNEALKTLIENKQEFKDIYVQGELSNLTFNKSGHIYFSIKEQDAAINCMMWKTNAYKIQSLNLEDGMQIICYGRLTYYIPTGRVSFEVRDIQIHGIGDLQKIFEQRYKELEQKGWFDPNLKKSIPEFVKNVGIITADSGAAIYDLIRTVHRRLPLINIYLFPAQVQGDKAEIDITNKIKQANNFKIDLDVLIVGRGGGSYEDLWAFNELEVLQAIKNSHIPIISAVGHEPDWVLSDYVADIRAATPTAAGELVSKSIIEIKNQLKHYYQNYKTLILNKLDFFNEKINNYKKDQTKYIKDNFSFKYLQLKQLSIDNTKWTKNKIDSVIYKLEDYKHSINNSIIHIINSQNKALKNYLIADEQKILNYLKKQISEFNYTISSFKGHINQILKYEELSFDTLENKLNSLDPLKPLQNGYSIVTNLNHQKIRSYKQVKLNEDLKVILTDSKLTVTIKEVKTNEQ.

Belongs to the XseA family. Heterooligomer composed of large and small subunits.

It is found in the cytoplasm. It carries out the reaction Exonucleolytic cleavage in either 5'- to 3'- or 3'- to 5'-direction to yield nucleoside 5'-phosphates.. Functionally, bidirectionally degrades single-stranded DNA into large acid-insoluble oligonucleotides, which are then degraded further into small acid-soluble oligonucleotides. The chain is Exodeoxyribonuclease 7 large subunit from Mycoplasma mycoides subsp. mycoides SC (strain CCUG 32753 / NCTC 10114 / PG1).